Consider the following 1010-residue polypeptide: Glycine--tRNA ligase (1010 aa).

The tract at residues 1–312 (MSEHPLTLQS…TSESVVPMIS (312 aa)) is glycine--tRNA ligase alpha subunit. Positions 313 to 1010 (STEDLLLEIG…SLCHWESVAV (698 aa)) are glycine--tRNA ligase beta subunit.

Belongs to the class-II aminoacyl-tRNA synthetase family.

The protein localises to the cytoplasm. It carries out the reaction tRNA(Gly) + glycine + ATP = glycyl-tRNA(Gly) + AMP + diphosphate. The chain is Glycine--tRNA ligase (glyQS) from Chlamydia pneumoniae (Chlamydophila pneumoniae).